We begin with the raw amino-acid sequence, 204 residues long: UPF0637 protein lin1053 (204 aa).

Belongs to the UPF0637 family.

This Listeria innocua serovar 6a (strain ATCC BAA-680 / CLIP 11262) protein is UPF0637 protein lin1053.